The chain runs to 105 residues: Large ribosomal subunit protein uL24 (105 aa).

It belongs to the universal ribosomal protein uL24 family. Part of the 50S ribosomal subunit.

Functionally, one of two assembly initiator proteins, it binds directly to the 5'-end of the 23S rRNA, where it nucleates assembly of the 50S subunit. One of the proteins that surrounds the polypeptide exit tunnel on the outside of the subunit. This Xanthomonas oryzae pv. oryzae (strain MAFF 311018) protein is Large ribosomal subunit protein uL24.